The chain runs to 115 residues: Large ribosomal subunit protein bL20c (115 aa).

Belongs to the bacterial ribosomal protein bL20 family.

It is found in the plastid. The protein resides in the chloroplast. Binds directly to 23S ribosomal RNA and is necessary for the in vitro assembly process of the 50S ribosomal subunit. It is not involved in the protein synthesizing functions of that subunit. This chain is Large ribosomal subunit protein bL20c, found in Gnetum parvifolium (Small-leaved jointfir).